An 895-amino-acid chain; its full sequence is Dystroglycan 1 (895 aa).

An N-terminal signal peptide occupies residues 1–29 (MRMSVGSAVPLPLWGRTFLLLLSVAVTQS). The required for laminin recognition stretch occupies residues 30–408 (HWPSEPSEAV…SQIRPTMTIP (379 aa)). Positions 49 to 71 (SMHSALSDLHETVPTVVGIPDGT) are O-glycosylated at one site. N-linked (GlcNAc...) asparagine glycosylation occurs at asparagine 141. The cysteines at positions 182 and 264 are disulfide-linked. The interval 316–485 (ATPTPVTAIG…PATRMRTTTS (170 aa)) is mucin-like domain. Threonine 317, threonine 319, and threonine 379 each carry an O-linked (Man6P...) threonine glycan. Residues 381 to 500 (TLGPIQPTRV…GEPNQRPELK (120 aa)) form a disordered region. The segment covering 393–403 (AGTTVPSQIRP) has biased composition (polar residues). Residues 413 to 447 (PSTVTTPPTTTTKKPRVSTPRPATPSTDSSTTTTR) are compositionally biased toward low complexity. Positions 463–485 (TTKAPITRLETASPATRMRTTTS) are O-glycosylated at seven sites with GalNAc. Residues 603–712 (KAPARFKAKL…MSITVTGSGS (110 aa)) enclose the Peptidase S72 domain. N-linked (GlcNAc...) asparagine glycans are attached at residues asparagine 641, asparagine 649, and asparagine 661. Residues 654-749 (SIVVEWTNNT…DPEKSSEDDV (96 aa)) are Extracellular-facing. Cysteine 669 and cysteine 713 are oxidised to a cystine. The tract at residues 724-747 (PMRVPSEAPATEVPDRDPEKSSED) is disordered. Residues 736–747 (VPDRDPEKSSED) show a composition bias toward basic and acidic residues. Residues 750–775 (YLHTVIPAVVVAAILLIAGIIAMICY) traverse the membrane as a helical segment. Positions 776-782 (RKKRKGK) match the Nuclear localization signal motif. Over 776-895 (RKKRKGKLTL…YRSPPPYVPP (120 aa)) the chain is Cytoplasmic. Threonine 790 carries the phosphothreonine modification. Residues 819-895 (LQEEKAPLPP…YRSPPPYVPP (77 aa)) are required for interaction with CAV3. A disordered region spans residues 823-895 (KAPLPPPEYP…YRSPPPYVPP (73 aa)). Positions 832-846 (PNQSMPETTPLNQDT) are enriched in polar residues. Over residues 859–870 (SAPPYQPPPPFT) the composition is skewed to pro residues. The required for binding DMD and UTRN stretch occupies residues 880–895 (PKNMTPYRSPPPYVPP). The PPXY motif signature appears at 889-892 (PPPY). Tyrosine 892 carries the phosphotyrosine; by SRC modification.

In terms of assembly, monomer. Heterodimer of alpha- and beta-dystroglycan subunits which are the central components of the dystrophin-glycoprotein complex. This complex then can form a dystrophin-associated glycoprotein complex (DGC) which is composed of three subcomplexes: a cytoplasmic complex comprised of DMD (or UTRN), DTNA and a number of syntrophins, such as SNTB1, SNTB2, SNTG1 and SNTG2, the transmembrane dystroglycan complex, and the sarcoglycan-sarcospan complex. Interacts (via the N-terminal of alphaDAG1) with LARGE1; the interaction enhances laminin binding. Interacts with SGCD. Interacts with AGR2 and AGR3. Interacts (betaDAG1) with DMD; the interaction is inhibited by phosphorylation on the PPXY motif. Interacts (betaDAG1, via its PPXY motif) with UTRN (via its WWW and ZZ domains); the interaction is inhibited by phosphorylation on the PPXY motif. Interacts (betaDAG1, via its phosphorylated PPXY motif) with the SH2 domain-containing proteins, FYN, CSK, NCK and SHC. Interacts (betaDAG1) with CAV3 (via a central WW-like domain); the interaction disrupts the binding of DMD. BetaDAG1 directly interacts with ANK3, but not with ANK2; this interaction does not interfere with DMD-binding and is required for retention at costameres. Identified in a dystroglycan complex that contains at least PRX, DRP2, UTRN, DMD and DAG1. Interacts with POMGNT1. BetaDAG1 interacts with CD93. O-glycosylated. POMGNT1 catalyzes the initial addition of N-acetylglucosamine, giving rise to the GlcNAc(beta1-2)Man(alpha1-)O-Ser/Thr moiety and thus providing the necessary basis for the addition of further carbohydrate moieties. Heavily O-glycosylated comprising of up to two thirds of its mass and the carbohydrate composition differs depending on tissue type. Mucin-type O-glycosylation is important for ligand binding activity. O-mannosylation is found in high abundance in both brain and muscle where the most abundant glycan is Sia-alpha-2-3-Gal-beta-1-4-Glc-NAc-beta-1-2-Man. In muscle, glycosylation on Thr-317, Thr-319 and Thr-379 by a phosphorylated O-mannosyl glycan with the structure 2-(N-acetylamido)-2-deoxygalactosyl-beta-1,3-2-(N-acetylamido)-2-deoxyglucosyl-beta-1,4-6-phosphomannose is mediated by like-acetylglucosaminyltransferase (LARGE1) protein amd is required for laminin binding. O-glycosylated in the N-terminal region with a core 1 or possibly core 8 glycan. The brain form displays a unique glycosylation pattern which is absent in other tissues; this form shows enhanced binding to laminin LAMA5 compared to the skeletal muscle form. In terms of processing, N-glycosylated. Post-translationally, autolytic cleavage produces the alpha and beta subunits. In cutaneous cells, as well as in certain pathological conditions, shedding of beta-dystroglycan can occur releasing a peptide of about 30 kDa. SRC-mediated phosphorylation of the PPXY motif of the beta subunit recruits SH2 domain-containing proteins, but inhibits binding to WWW domain-containing proteins, DMD and UTRN. This phosphorylation also inhibits nuclear entry. As to expression, expressed in brain (at protein level). Expressed in the myelin sheath of peripheral nerves.

The protein resides in the secreted. Its subcellular location is the extracellular space. It localises to the cell membrane. The protein localises to the cytoplasm. It is found in the cytoskeleton. The protein resides in the nucleus. Its subcellular location is the nucleoplasm. It localises to the sarcolemma. The protein localises to the postsynaptic cell membrane. In terms of biological role, the dystroglycan complex is involved in a number of processes including laminin and basement membrane assembly, sarcolemmal stability, cell survival, peripheral nerve myelination, nodal structure, cell migration, and epithelial polarization. Extracellular peripheral glycoprotein that acts as a receptor for extracellular matrix proteins containing laminin-G domains. Receptor for laminin-2 (LAMA2) and agrin in peripheral nerve Schwann cells. Also acts as a receptor for laminin LAMA5. Its function is as follows. Transmembrane protein that plays important roles in connecting the extracellular matrix to the cytoskeleton. Acts as a cell adhesion receptor in both muscle and non-muscle tissues. Receptor for both DMD and UTRN and, through these interactions, scaffolds axin to the cytoskeleton. Also functions in cell adhesion-mediated signaling and implicated in cell polarity. This Bos taurus (Bovine) protein is Dystroglycan 1.